Reading from the N-terminus, the 115-residue chain is U3-lycotoxin-Ls1c (115 aa).

An N-terminal signal peptide occupies residues methionine 1–alanine 20. Positions glutamate 21–arginine 44 are excised as a propeptide. 4 disulfides stabilise this stretch: cysteine 48-cysteine 63, cysteine 55-cysteine 72, cysteine 62-cysteine 87, and cysteine 74-cysteine 85.

The protein belongs to the neurotoxin 19 (CSTX) family. 01 subfamily. As to expression, expressed by the venom gland.

Its subcellular location is the secreted. The chain is U3-lycotoxin-Ls1c from Lycosa singoriensis (Wolf spider).